The following is a 215-amino-acid chain: Large ribosomal subunit protein bL25 (215 aa).

Over residues 192-203 (EEATEEEEEAAE) the composition is skewed to acidic residues. Residues 192-215 (EEATEEEEEAAEPEVIKRKEEEEE) form a disordered region. A compositionally biased stretch (basic and acidic residues) spans 205 to 215 (EVIKRKEEEEE).

The protein belongs to the bacterial ribosomal protein bL25 family. CTC subfamily. Part of the 50S ribosomal subunit; part of the 5S rRNA/L5/L18/L25 subcomplex. Contacts the 5S rRNA. Binds to the 5S rRNA independently of L5 and L18.

Its function is as follows. This is one of the proteins that binds to the 5S RNA in the ribosome where it forms part of the central protuberance. This Thermotoga maritima (strain ATCC 43589 / DSM 3109 / JCM 10099 / NBRC 100826 / MSB8) protein is Large ribosomal subunit protein bL25.